Here is a 467-residue protein sequence, read N- to C-terminus: UDP-N-acetylmuramoylalanine--D-glutamate ligase (467 aa).

115 to 121 contributes to the ATP binding site; the sequence is GTDGKTT.

The protein belongs to the MurCDEF family.

The protein localises to the cytoplasm. The catalysed reaction is UDP-N-acetyl-alpha-D-muramoyl-L-alanine + D-glutamate + ATP = UDP-N-acetyl-alpha-D-muramoyl-L-alanyl-D-glutamate + ADP + phosphate + H(+). It functions in the pathway cell wall biogenesis; peptidoglycan biosynthesis. Cell wall formation. Catalyzes the addition of glutamate to the nucleotide precursor UDP-N-acetylmuramoyl-L-alanine (UMA). In Chlorobaculum parvum (strain DSM 263 / NCIMB 8327) (Chlorobium vibrioforme subsp. thiosulfatophilum), this protein is UDP-N-acetylmuramoylalanine--D-glutamate ligase.